A 261-amino-acid chain; its full sequence is uncharacterized protein (261 aa).

Polar residues predominate over residues 1-12 (MSRTSSQNQEII). Positions 1–139 (MSRTSSQNQE…KELDTINKKT (139 aa)) are disordered. Residues 23–55 (SSKPSKSSKPSKSSKPSKSSKTSKSSRSSGSKS) show a composition bias toward low complexity. Residues 65–74 (SRKDKYKEEY) show a composition bias toward basic and acidic residues. Over residues 79 to 108 (YPDEQEYEQEYEQEYEQEYQDNGEQTEEFV) the composition is skewed to acidic residues. The segment covering 122–139 (DERQTQSNKELDTINKKT) has biased composition (basic and acidic residues). Coiled coils occupy residues 151–181 (MDHDDNIKRLNAKMKAFKDAKKQEEESIIKL) and 218–243 (EDIIRDALMEVVRNERKVAELVKKIE).

This is an uncharacterized protein from Acanthamoeba polyphaga (Amoeba).